The chain runs to 389 residues: S-adenosylmethionine synthase (389 aa).

ATP is bound at residue His-19. Residue Asp-21 coordinates Mg(2+). K(+) is bound at residue Glu-47. L-methionine-binding residues include Glu-60 and Gln-103. The segment at 103-113 (QSVDIAQGVSR) is flexible loop. Residues 168 to 170 (DGK), 234 to 235 (RF), Asp-243, 249 to 250 (RK), Ala-266, and Lys-270 each bind ATP. An L-methionine-binding site is contributed by Asp-243. Lys-274 is a binding site for L-methionine.

Belongs to the AdoMet synthase family. In terms of assembly, homotetramer; dimer of dimers. Mg(2+) serves as cofactor. K(+) is required as a cofactor.

It localises to the cytoplasm. The enzyme catalyses L-methionine + ATP + H2O = S-adenosyl-L-methionine + phosphate + diphosphate. It functions in the pathway amino-acid biosynthesis; S-adenosyl-L-methionine biosynthesis; S-adenosyl-L-methionine from L-methionine: step 1/1. Functionally, catalyzes the formation of S-adenosylmethionine (AdoMet) from methionine and ATP. The overall synthetic reaction is composed of two sequential steps, AdoMet formation and the subsequent tripolyphosphate hydrolysis which occurs prior to release of AdoMet from the enzyme. This is S-adenosylmethionine synthase from Solidesulfovibrio magneticus (strain ATCC 700980 / DSM 13731 / RS-1) (Desulfovibrio magneticus).